A 216-amino-acid polypeptide reads, in one-letter code: Regulator of G-protein signaling 19 (216 aa).

A compositionally biased stretch (basic and acidic residues) spans Met1–Arg19. Residues Met1–Pro30 are disordered. Position 24 is a phosphoserine; by CK2 (Ser24). The region spanning Ser90–Leu206 is the RGS domain. Ser97 carries the post-translational modification Phosphoserine. Ser151 carries the phosphoserine; by MAPK1 and MAPK3 modification. The interaction with GIPC stretch occupies residues Leu207 to Ala216.

As to quaternary structure, interacts with GIPC PDZ domain. Interacts with GNAO1. Fatty acylated. Heavily palmitoylated in the cysteine string motif. Post-translationally, phosphorylated, mainly on serine residues.

It is found in the membrane. Inhibits signal transduction by increasing the GTPase activity of G protein alpha subunits thereby driving them into their inactive GDP-bound form. Binds to G-alpha subfamily 1 members, predominantly to G(i)-alpha-3. Activity on G(z)-alpha is inhibited by phosphorylation and palmitoylation of the G-protein. This Rattus norvegicus (Rat) protein is Regulator of G-protein signaling 19 (Rgs19).